The chain runs to 1503 residues: E3 ubiquitin-protein ligase listerin (1503 aa).

HEAT repeat units follow at residues 52-89 (SGID…ETSS), 93-129 (CYEH…KLEK), 133-170 (KGLK…ADKK), 280-318 (LNTP…SAQF), 323-345 (SLQN…HWRV), 346-384 (LQHF…NLPW), 552-589 (GDIV…TGGS), 640-663 (AENV…NEAE), 664-700 (KNVL…DFNS), 845-882 (LEKR…LDDS), 1022-1065 (TLFI…RMFR), 1078-1117 (RTLL…SLLE), 1141-1183 (AAAK…VMIS), and 1302-1340 (FKSI…KLLI). An RING-type zinc finger spans residues 1446-1499 (CTICMMTVHQQTNQLPKVKCKQCKNRFHSNCLVSSFHTYKWFESSNQSTCPLCR).

The protein belongs to the LTN1 family. Component of the ribosome quality control complex (RQC), composed of at least the E3 ubiquitin ligase ltn1 and nemf. The complex probably also contains tcf25 as well as vcp/p97 and its ubiquitin-binding cofactors. RQC forms a stable complex with 60S ribosomal subunits.

Its subcellular location is the cytoplasm. It is found in the cytosol. It carries out the reaction S-ubiquitinyl-[E2 ubiquitin-conjugating enzyme]-L-cysteine + [acceptor protein]-L-lysine = [E2 ubiquitin-conjugating enzyme]-L-cysteine + N(6)-ubiquitinyl-[acceptor protein]-L-lysine.. Its pathway is protein modification; protein ubiquitination. Functionally, E3 ubiquitin-protein ligase. Component of the ribosome quality control complex (RQC), a ribosome-associated complex that mediates ubiquitination and extraction of incompletely synthesized nascent chains for proteasomal degradation. Ubiquitination leads to vcp/p97 recruitment for extraction and degradation of the incomplete translation product. This is E3 ubiquitin-protein ligase listerin from Caenorhabditis briggsae.